Here is a 401-residue protein sequence, read N- to C-terminus: Large ribosomal subunit protein uL3 (401 aa).

The interval 1 to 21 (MSHRKFSAPRHGHMGFTPKKR) is disordered.

This sequence belongs to the universal ribosomal protein uL3 family.

It is found in the cytoplasm. Its function is as follows. The L3 protein is a component of the large subunit of cytoplasmic ribosomes. This is Large ribosomal subunit protein uL3 (rpl-3) from Caenorhabditis briggsae.